The chain runs to 687 residues: Outer dynein arm-docking complex subunit 1 (687 aa).

Coiled-coil stretches lie at residues 100-193, 222-267, and 341-421; these read QVRV…YLNV, REEA…LKLK, and INEQ…LFTR. The segment at 126–147 is disordered; that stretch reads SRNSAHSKNARSPGCVQHDKVK. 3 disordered regions span residues 363-388, 487-511, and 540-687; these read VSGRRSEEDRRAQQEQQRAELQQRVD, FPKKVAPPQPPDNLEDPPGFEAKDD, and ESTP…QSNY. A compositionally biased stretch (basic and acidic residues) spans 366 to 388; that stretch reads RRSEEDRRAQQEQQRAELQQRVD. A compositionally biased stretch (low complexity) spans 544–556; it reads SMTSSTQKVSSSS. Composition is skewed to polar residues over residues 557-611 and 620-629; these read RLVT…SSRG and RSPNSSSYLG. The segment covering 660-680 has biased composition (low complexity); it reads SPGPASSPGPASSTGQASSTS.

This sequence belongs to the ODA1/DCC2 family. Component of the outer dynein arm-docking complex along with ODAD2, ODAD3, ODAD4 and CLXN. Interacts with ODAD3. Interacts with ODAD4; this interaction may facilitate the recruitment and/or attachment of outer dynein arm docking complex proteins, including ODAD1, ODAD3, and ODAD4 to ciliary axonemes. Interacts with DNAH9. Interacts with MNS1. Interacts with PIERCE1 and PIERCE2; the interactions link the outer dynein arms docking complex (ODA-DC) to the internal microtubule inner proteins (MIP) in cilium axoneme. Expressed in trachea multiciliated cells.

The protein resides in the cytoplasm. It localises to the cytoskeleton. Its subcellular location is the cilium axoneme. Its function is as follows. Component of the outer dynein arm-docking complex (ODA-DC) that mediates outer dynein arms (ODA) binding onto the doublet microtubule. Involved in mediating assembly of both ODAs and their axonemal docking complex onto ciliary microtubules. The polypeptide is Outer dynein arm-docking complex subunit 1 (ODAD1) (Bos taurus (Bovine)).